The sequence spans 105 residues: Heat shock protein HspQ (105 aa).

This sequence belongs to the HspQ family.

The protein localises to the cytoplasm. Its function is as follows. Involved in the degradation of certain denaturated proteins, including DnaA, during heat shock stress. This is Heat shock protein HspQ from Blochmanniella floridana.